The primary structure comprises 440 residues: Glucose-1-phosphate adenylyltransferase (440 aa).

Alpha-D-glucose 1-phosphate-binding positions include tyrosine 125, glycine 190, 205 to 206, and serine 223; that span reads EK.

It belongs to the bacterial/plant glucose-1-phosphate adenylyltransferase family. As to quaternary structure, homotetramer.

It carries out the reaction alpha-D-glucose 1-phosphate + ATP + H(+) = ADP-alpha-D-glucose + diphosphate. Its pathway is glycan biosynthesis; glycogen biosynthesis. Its function is as follows. Involved in the biosynthesis of ADP-glucose, a building block required for the elongation reactions to produce glycogen. Catalyzes the reaction between ATP and alpha-D-glucose 1-phosphate (G1P) to produce pyrophosphate and ADP-Glc. In Dechloromonas aromatica (strain RCB), this protein is Glucose-1-phosphate adenylyltransferase.